Reading from the N-terminus, the 43-residue chain is Delta/kappa-actitoxin-Avd4a (43 aa).

Disulfide bonds link Cys-4–Cys-39, Cys-6–Cys-32, and Cys-22–Cys-40.

Belongs to the sea anemone type 3 (BDS) potassium channel toxin family.

The protein localises to the secreted. It localises to the nematocyst. Acts as a gating modifier on both Kv and Nav ion channels, and also acts on blood pressure. Voltage-dependently inhibits voltage-gated potassium channels Kv3 (Kv3.1/KCNC1, Kv3.2/KCNC2 and Kv3.4/KCNC4) and slows inactivation of the voltage-gated sodium channel Nav1.7/SCN9A. Inhibits all Kv3.1, Kv3.2 and Kv3.4 by about 50% when tested at a voltage of +40 mV (45%, 48% and 56%, respectively). May act by binding residues in voltage-sensing domains S3b and S4 of Kv3. On sodium channel, tests have been done on human Nav1.7/SCN9A (expressed in HEK293 cells) (EC(50)=3 nM) and rat SCG neurons that mostly carry Nav1.7 channels (EC(50)=300 nM). This toxin also reduces blood pressure. The chain is Delta/kappa-actitoxin-Avd4a from Anemonia sulcata (Mediterranean snakelocks sea anemone).